A 206-amino-acid chain; its full sequence is Pyridoxine/pyridoxamine 5'-phosphate oxidase (206 aa).

Residues 53–58, 68–69, Lys75, and Gln97 each bind FMN; these read RMVLLK and YT. Lys58 contributes to the substrate binding site. The substrate site is built by Tyr115, Arg119, and Ser123. FMN contacts are provided by residues 132-133 and Trp177; that span reads QS. 183 to 185 is a binding site for substrate; that stretch reads RLH. FMN is bound at residue Arg187.

Belongs to the pyridoxamine 5'-phosphate oxidase family. Homodimer. FMN is required as a cofactor.

The catalysed reaction is pyridoxamine 5'-phosphate + O2 + H2O = pyridoxal 5'-phosphate + H2O2 + NH4(+). The enzyme catalyses pyridoxine 5'-phosphate + O2 = pyridoxal 5'-phosphate + H2O2. The protein operates within cofactor metabolism; pyridoxal 5'-phosphate salvage; pyridoxal 5'-phosphate from pyridoxamine 5'-phosphate: step 1/1. Its pathway is cofactor metabolism; pyridoxal 5'-phosphate salvage; pyridoxal 5'-phosphate from pyridoxine 5'-phosphate: step 1/1. Functionally, catalyzes the oxidation of either pyridoxine 5'-phosphate (PNP) or pyridoxamine 5'-phosphate (PMP) into pyridoxal 5'-phosphate (PLP). The protein is Pyridoxine/pyridoxamine 5'-phosphate oxidase of Rhizobium etli (strain ATCC 51251 / DSM 11541 / JCM 21823 / NBRC 15573 / CFN 42).